A 352-amino-acid polypeptide reads, in one-letter code: Molybdenum import ATP-binding protein ModC (352 aa).

The region spanning 1–229 is the ABC transporter domain; that stretch reads MLELNFSQTL…SVMNPWLPKE (229 aa). Residue 31–38 coordinates ATP; sequence GVSGAGKT. One can recognise a Mop domain in the interval 289 to 352; that stretch reads QTSIRNVLRA…AQIKSVSITA (64 aa).

This sequence belongs to the ABC transporter superfamily. Molybdate importer (TC 3.A.1.8) family. In terms of assembly, the complex is composed of two ATP-binding proteins (ModC), two transmembrane proteins (ModB) and a solute-binding protein (ModA).

Its subcellular location is the cell inner membrane. The enzyme catalyses molybdate(out) + ATP + H2O = molybdate(in) + ADP + phosphate + H(+). Its function is as follows. Part of the ABC transporter complex ModABC involved in molybdenum import. Responsible for energy coupling to the transport system. This is Molybdenum import ATP-binding protein ModC from Shigella boydii serotype 4 (strain Sb227).